Consider the following 101-residue polypeptide: uncharacterized protein (101 aa).

This is an uncharacterized protein from Enterobacteria phage T3 (Bacteriophage T3).